We begin with the raw amino-acid sequence, 390 residues long: Adherens junction-associated protein 1 (390 aa).

The signal sequence occupies residues 1-37; that stretch reads MWITQLLGIRSGPPLGSHAWILIAIFQLAMDFIICES. Topologically, residues 38–262 are extracellular; sequence ESPGKAYKHL…NDTSGLAVHQ (225 aa). Positions 218–253 are disordered; it reads LQNPGIHNGKKSPGRISTTDPNPGNGKTARPPRIPN. The helical transmembrane segment at 263 to 283 threads the bilayer; that stretch reads IITITVSLIMVIAALITTLVL. The tract at residues 283-390 is targeting signals; it reads LKNCCAQSGN…VSEKWFEISC (108 aa). The Cytoplasmic segment spans residues 284–390; the sequence is KNCCAQSGNA…VSEKWFEISC (107 aa).

It localises to the basolateral cell membrane. The protein resides in the apical cell membrane. Its subcellular location is the cell junction. It is found in the adherens junction. Its function is as follows. May play a role in cell adhesion and cell migration. The sequence is that of Adherens junction-associated protein 1 (ajap1) from Xenopus tropicalis (Western clawed frog).